Here is a 351-residue protein sequence, read N- to C-terminus: Protein RecA (351 aa).

73 to 80 serves as a coordination point for ATP; that stretch reads GPESSGKT.

It belongs to the RecA family.

The protein resides in the cytoplasm. In terms of biological role, can catalyze the hydrolysis of ATP in the presence of single-stranded DNA, the ATP-dependent uptake of single-stranded DNA by duplex DNA, and the ATP-dependent hybridization of homologous single-stranded DNAs. It interacts with LexA causing its activation and leading to its autocatalytic cleavage. The chain is Protein RecA from Herbaspirillum seropedicae.